Consider the following 232-residue polypeptide: 2,3,4,5-tetrahydropyridine-2,6-dicarboxylate N-acetyltransferase (232 aa).

Belongs to the transferase hexapeptide repeat family. DapH subfamily.

The enzyme catalyses (S)-2,3,4,5-tetrahydrodipicolinate + acetyl-CoA + H2O = L-2-acetamido-6-oxoheptanedioate + CoA. It participates in amino-acid biosynthesis; L-lysine biosynthesis via DAP pathway; LL-2,6-diaminopimelate from (S)-tetrahydrodipicolinate (acetylase route): step 1/3. Catalyzes the transfer of an acetyl group from acetyl-CoA to tetrahydrodipicolinate. The chain is 2,3,4,5-tetrahydropyridine-2,6-dicarboxylate N-acetyltransferase from Streptococcus thermophilus (strain CNRZ 1066).